The primary structure comprises 234 residues: Carboxy-S-adenosyl-L-methionine synthase (234 aa).

Residues Tyr35, 60 to 62 (GCS), 109 to 110 (DV), Asn124, and Arg191 each bind S-adenosyl-L-methionine.

This sequence belongs to the class I-like SAM-binding methyltransferase superfamily. Cx-SAM synthase family. In terms of assembly, homodimer.

It catalyses the reaction prephenate + S-adenosyl-L-methionine = carboxy-S-adenosyl-L-methionine + 3-phenylpyruvate + H2O. Catalyzes the conversion of S-adenosyl-L-methionine (SAM) to carboxy-S-adenosyl-L-methionine (Cx-SAM). This is Carboxy-S-adenosyl-L-methionine synthase from Campylobacter curvus (strain 525.92).